The following is a 209-amino-acid chain: Putative 3-methyladenine DNA glycosylase (209 aa).

Belongs to the DNA glycosylase MPG family.

The sequence is that of Putative 3-methyladenine DNA glycosylase from Lactiplantibacillus plantarum (strain ATCC BAA-793 / NCIMB 8826 / WCFS1) (Lactobacillus plantarum).